Reading from the N-terminus, the 556-residue chain is Glutamine--tRNA ligase (556 aa).

The 'HIGH' region signature appears at 34-44 (PEPNGYLHIGH). ATP is bound by residues 35–37 (EPN) and 41–47 (HIGHAKS). D67 and Y212 together coordinate L-glutamine. ATP contacts are provided by residues T231, 261-262 (RL), and 269-271 (MSK). A 'KMSKS' region motif is present at residues 268–272 (VMSKR).

This sequence belongs to the class-I aminoacyl-tRNA synthetase family. Monomer.

It is found in the cytoplasm. The catalysed reaction is tRNA(Gln) + L-glutamine + ATP = L-glutaminyl-tRNA(Gln) + AMP + diphosphate. In Vibrio campbellii (strain ATCC BAA-1116), this protein is Glutamine--tRNA ligase.